Here is a 1108-residue protein sequence, read N- to C-terminus: Probable E3 ubiquitin ligase SUD1 (1108 aa).

The interval 1–60 is disordered; it reads MEISPADSLSISGAAASEVVSEPSVSSSSSSSSPNQASPNPFSNMDPAVSTATGSRYVDD. Over residues 10–44 the composition is skewed to low complexity; sequence SISGAAASEVVSEPSVSSSSSSSSPNQASPNPFSN. The segment at 60-121 adopts an RING-CH-type zinc-finger fold; that stretch reads DDEDEEDVCR…EVCKHPFSFS (62 aa). Residues Cys68, Cys71, Cys85, Cys87, His95, Cys98, Cys111, and Cys114 each contribute to the Zn(2+) site. The next 2 membrane-spanning stretches (helical) occupy residues 157–177 and 197–217; these read FVLS…WRLA and VILT…FIFL. Positions 237 to 246 are enriched in basic and acidic residues; the sequence is ERDDDVDRNG. Residues 237 to 273 form a disordered region; that stretch reads ERDDDVDRNGARAARRPAGQANRNLAGEGNGEDAGDQ. A coiled-coil region spans residues 286–308; it reads ENVLARLDIQAARLEAQVEQMFD. A run of 8 helical transmembrane segments spans residues 339-359, 362-382, 462-482, 489-509, 525-545, 572-592, 630-650, and 669-689; these read FTVL…PFTL, IILY…VAAS, AVGY…IALI, PLTV…PSLL, VAFL…WWLD, LVHW…VSLL, VLLS…LPVK, and PFTE…FIIE. Residues 762-784 form a disordered region; that stretch reads PNRSRLRAGNVNTGEEYEDDDEQ. 6 helical membrane-spanning segments follow: residues 796-816, 844-864, 894-914, 923-943, 982-1002, and 1017-1036; these read IILL…ALIV, YAFV…RYAI, AIWV…LVIV, SPVF…KIWT, EIVF…YVLA, and SAVY…FCFC.

As to expression, expressed in cotyledons, leaves, roots, stems, inflorescences and siliques. Expression higher at the top than at the base of the stem.

The protein localises to the membrane. It carries out the reaction S-ubiquitinyl-[E2 ubiquitin-conjugating enzyme]-L-cysteine + [acceptor protein]-L-lysine = [E2 ubiquitin-conjugating enzyme]-L-cysteine + N(6)-ubiquitinyl-[acceptor protein]-L-lysine.. It participates in protein modification; protein ubiquitination. Functionally, probable E3 ubiquitin ligase acting as a positive post-transcriptional regulator of 3-hydroxy-3-methylglutaryl-coenzyme A reductase activity. Might be involved in the quality control that degrades misfolded proteins. This is Probable E3 ubiquitin ligase SUD1 (SUD1) from Arabidopsis thaliana (Mouse-ear cress).